The chain runs to 227 residues: Urease accessory protein UreF (227 aa).

This sequence belongs to the UreF family. In terms of assembly, ureD, UreF and UreG form a complex that acts as a GTP-hydrolysis-dependent molecular chaperone, activating the urease apoprotein by helping to assemble the nickel containing metallocenter of UreC. The UreE protein probably delivers the nickel.

It is found in the cytoplasm. Required for maturation of urease via the functional incorporation of the urease nickel metallocenter. In Blochmanniella floridana, this protein is Urease accessory protein UreF.